The chain runs to 32 residues: Dermatoxin-J3 (32 aa).

Position 32 is a glutamine amide (Gln-32).

As to expression, expressed by the skin glands.

It is found in the secreted. In terms of biological role, antimicrobial peptide. This chain is Dermatoxin-J3, found in Phasmahyla jandaia (Jandaia leaf frog).